The primary structure comprises 255 residues: GTP cyclohydrolase FolE2 (255 aa).

It belongs to the GTP cyclohydrolase IV family.

The catalysed reaction is GTP + H2O = 7,8-dihydroneopterin 3'-triphosphate + formate + H(+). The protein operates within cofactor biosynthesis; 7,8-dihydroneopterin triphosphate biosynthesis; 7,8-dihydroneopterin triphosphate from GTP: step 1/1. Converts GTP to 7,8-dihydroneopterin triphosphate. This is GTP cyclohydrolase FolE2 from Syntrophus aciditrophicus (strain SB).